Here is a 257-residue protein sequence, read N- to C-terminus: MMHILVSNDDGYQAPGILALAEALSEMARVTVVAPERDRSGASNSLTLDYPLRVHGTGPHRYRVEGTPTDCVHLAITGLLSEEPDMVVSGINAGANMGDDVLYSGTVAAATEGRFLGLPAIAISLNAFEPRHLATAARVAQLIVQRLSRDPLPSDTILNINVPDLPWHEVQGWEATRLGRRHRAEPVVRDEDPRGRAIYWIGPPGSEEDAGPGTDFYAVRNGYVSVTPIQVDLTRYTALDQVAGWVSGLGRPAEEGH.

D9, D10, S40, and N92 together coordinate a divalent metal cation.

This sequence belongs to the SurE nucleotidase family. Requires a divalent metal cation as cofactor.

The protein resides in the cytoplasm. It catalyses the reaction a ribonucleoside 5'-phosphate + H2O = a ribonucleoside + phosphate. In terms of biological role, nucleotidase that shows phosphatase activity on nucleoside 5'-monophosphates. This Alkalilimnicola ehrlichii (strain ATCC BAA-1101 / DSM 17681 / MLHE-1) protein is 5'-nucleotidase SurE.